Here is a 153-residue protein sequence, read N- to C-terminus: MSYHSFSLEPKYENTMLSQRFKEIDKLFSTLSGKKIISDSVPPYDILQLKENFYKLIVSVPGYLEKNLEISTQYDQLIIIGKKEITENTNEKKETVEKILHQEIYTGDFSLSFRLNERISVMSATLDQGLLTIYFEYQIPEKQKIQKIQINVK.

The sHSP domain maps to 35–153; it reads KIISDSVPPY…KIQKIQINVK (119 aa).

This sequence belongs to the small heat shock protein (HSP20) family.

The polypeptide is Small heat shock protein ibp (ibp) (Buchnera aphidicola subsp. Thelaxes suberi).